The primary structure comprises 61 residues: Large ribosomal subunit protein bL28 (61 aa).

The disordered stretch occupies residues 1–26 (MAKDFINGKRTQFGNKRSHALNSSRR). A compositionally biased stretch (polar residues) spans 9 to 25 (KRTQFGNKRSHALNSSR).

The protein belongs to the bacterial ribosomal protein bL28 family.

In Limosilactobacillus reuteri (strain DSM 20016) (Lactobacillus reuteri), this protein is Large ribosomal subunit protein bL28.